We begin with the raw amino-acid sequence, 430 residues long: GTPase Obg (430 aa).

Residues 1 to 158 enclose the Obg domain; that stretch reads MFVDQVTISL…LDVTLELKLL (158 aa). The segment at 118–145 is disordered; it reads RGGRGGRGNSRFATPRNPAPDFSENGEP. The OBG-type G domain maps to 159–329; that stretch reads ADVGLVGFPS…LLYAIADKLD (171 aa). GTP-binding positions include 165–172, 190–194, 212–215, 282–285, and 310–312; these read GFPSVGKS, FTTIK, DLPG, NKMD, and STI. Mg(2+) contacts are provided by serine 172 and threonine 192. The region spanning 352–430 is the OCT domain; it reads KHTPSQDKFT…ILGGEFEFVE (79 aa).

This sequence belongs to the TRAFAC class OBG-HflX-like GTPase superfamily. OBG GTPase family. As to quaternary structure, monomer. It depends on Mg(2+) as a cofactor.

The protein localises to the cytoplasm. An essential GTPase which binds GTP, GDP and possibly (p)ppGpp with moderate affinity, with high nucleotide exchange rates and a fairly low GTP hydrolysis rate. Plays a role in control of the cell cycle, stress response, ribosome biogenesis and in those bacteria that undergo differentiation, in morphogenesis control. In Staphylococcus haemolyticus (strain JCSC1435), this protein is GTPase Obg.